We begin with the raw amino-acid sequence, 356 residues long: Holliday junction branch migration complex subunit RuvB (356 aa).

Residues 1–14 (MAIVSSITNHSSLP) are compositionally biased toward polar residues. Positions 1–20 (MAIVSSITNHSSLPNDKGEE) are disordered. The segment at 13 to 201 (LPNDKGEERL…FGITQRLDFY (189 aa)) is large ATPase domain (RuvB-L). ATP-binding residues include leucine 40, arginine 41, glycine 82, lysine 85, threonine 86, threonine 87, arginine 191, tyrosine 201, and arginine 238. A Mg(2+)-binding site is contributed by threonine 86. Residues 202–273 (NYLDLENIIK…VVNDALDLHR (72 aa)) are small ATPAse domain (RuvB-S). Residues 276–356 (QRGLDATDRS…LLTSPNNIDK (81 aa)) form a head domain (RuvB-H) region. Residues arginine 331 and arginine 336 each contribute to the DNA site.

It belongs to the RuvB family. Homohexamer. Forms an RuvA(8)-RuvB(12)-Holliday junction (HJ) complex. HJ DNA is sandwiched between 2 RuvA tetramers; dsDNA enters through RuvA and exits via RuvB. An RuvB hexamer assembles on each DNA strand where it exits the tetramer. Each RuvB hexamer is contacted by two RuvA subunits (via domain III) on 2 adjacent RuvB subunits; this complex drives branch migration. In the full resolvosome a probable DNA-RuvA(4)-RuvB(12)-RuvC(2) complex forms which resolves the HJ.

It localises to the cytoplasm. It catalyses the reaction ATP + H2O = ADP + phosphate + H(+). The RuvA-RuvB-RuvC complex processes Holliday junction (HJ) DNA during genetic recombination and DNA repair, while the RuvA-RuvB complex plays an important role in the rescue of blocked DNA replication forks via replication fork reversal (RFR). RuvA specifically binds to HJ cruciform DNA, conferring on it an open structure. The RuvB hexamer acts as an ATP-dependent pump, pulling dsDNA into and through the RuvAB complex. RuvB forms 2 homohexamers on either side of HJ DNA bound by 1 or 2 RuvA tetramers; 4 subunits per hexamer contact DNA at a time. Coordinated motions by a converter formed by DNA-disengaged RuvB subunits stimulates ATP hydrolysis and nucleotide exchange. Immobilization of the converter enables RuvB to convert the ATP-contained energy into a lever motion, pulling 2 nucleotides of DNA out of the RuvA tetramer per ATP hydrolyzed, thus driving DNA branch migration. The RuvB motors rotate together with the DNA substrate, which together with the progressing nucleotide cycle form the mechanistic basis for DNA recombination by continuous HJ branch migration. Branch migration allows RuvC to scan DNA until it finds its consensus sequence, where it cleaves and resolves cruciform DNA. This Prochlorococcus marinus (strain NATL2A) protein is Holliday junction branch migration complex subunit RuvB.